Here is a 309-residue protein sequence, read N- to C-terminus: GTP cyclohydrolase MptA (309 aa).

This sequence belongs to the GTP cyclohydrolase IV family. As to quaternary structure, homodimer. It depends on Fe(2+) as a cofactor.

The catalysed reaction is GTP + H2O = 7,8-dihydroneopterin 2',3'-cyclic phosphate + formate + diphosphate + H(+). It participates in cofactor biosynthesis; 5,6,7,8-tetrahydromethanopterin biosynthesis. Functionally, converts GTP to 7,8-dihydro-D-neopterin 2',3'-cyclic phosphate, the first intermediate in the biosynthesis of coenzyme methanopterin. The sequence is that of GTP cyclohydrolase MptA from Haloquadratum walsbyi (strain DSM 16790 / HBSQ001).